Reading from the N-terminus, the 185-residue chain is UPF0215 protein APE_0476.1 (185 aa).

This sequence belongs to the UPF0215 family.

The sequence is that of UPF0215 protein APE_0476.1 from Aeropyrum pernix (strain ATCC 700893 / DSM 11879 / JCM 9820 / NBRC 100138 / K1).